A 219-amino-acid polypeptide reads, in one-letter code: Transmembrane protein 17A (219 aa).

N-linked (GlcNAc...) asparagine glycosylation is found at Asn18 and Asn27. 4 helical membrane passes run 56–76, 83–103, 121–141, and 153–173; these read MMLY…LLML, LPVY…IFEV, LAGF…FFIT, and AVHS…FLAL.

It belongs to the TMEM17 family. In terms of assembly, part of the tectonic-like complex (also named B9 complex).

It localises to the cell projection. It is found in the cilium membrane. Transmembrane component of the tectonic-like complex, a complex localized at the transition zone of primary cilia and acting as a barrier that prevents diffusion of transmembrane proteins between the cilia and plasma membranes. Required for ciliogenesis and sonic hedgehog/SHH signaling. The protein is Transmembrane protein 17A (tmem17a) of Danio rerio (Zebrafish).